The primary structure comprises 401 residues: Adenosine 3'-phospho 5'-phosphosulfate transporter 2 (401 aa).

N-linked (GlcNAc...) asparagine glycans are attached at residues Asn-12 and Asn-71. 6 helical membrane-spanning segments follow: residues 78–98 (LTQF…YGYL), 111–131 (YGWY…LIEL), 147–167 (MIIA…LGYL), 170–190 (PTQV…GVFI), 200–220 (VSAA…DSTI), and 223–243 (NFNL…AVIG). A glycan (N-linked (GlcNAc...) asparagine) is linked at Asn-254. Transmembrane regions (helical) follow at residues 267-287 (IGFV…PAVT), 298-317 (GYAF…VLAL), 324-346 (LIAV…IFFA), and 349-369 (FTFQ…LNVY).

The protein belongs to the nucleotide-sugar transporter family. SLC35B subfamily.

The protein localises to the golgi apparatus membrane. The catalysed reaction is 3'-phosphoadenylyl sulfate(in) + adenosine 3',5'-bisphosphate(out) = 3'-phosphoadenylyl sulfate(out) + adenosine 3',5'-bisphosphate(in). In terms of biological role, probably functions as a 3'-phosphoadenylyl sulfate:adenosine 3',5'-bisphosphate antiporter at the Golgi membranes. Mediates the transport from the cytosol into the lumen of the Golgi of 3'-phosphoadenylyl sulfate/adenosine 3'-phospho 5'-phosphosulfate (PAPS), a universal sulfuryl donor for sulfation events that take place in that compartment. In Pongo abelii (Sumatran orangutan), this protein is Adenosine 3'-phospho 5'-phosphosulfate transporter 2.